Consider the following 470-residue polypeptide: Argininosuccinate lyase (470 aa).

This sequence belongs to the lyase 1 family. Argininosuccinate lyase subfamily.

It localises to the cytoplasm. It carries out the reaction 2-(N(omega)-L-arginino)succinate = fumarate + L-arginine. It functions in the pathway amino-acid biosynthesis; L-arginine biosynthesis; L-arginine from L-ornithine and carbamoyl phosphate: step 3/3. The chain is Argininosuccinate lyase from Mycobacterium leprae (strain Br4923).